Consider the following 346-residue polypeptide: Phenylalanine--tRNA ligase alpha subunit (346 aa).

Glu-264 contributes to the Mg(2+) binding site.

The protein belongs to the class-II aminoacyl-tRNA synthetase family. Phe-tRNA synthetase alpha subunit type 1 subfamily. As to quaternary structure, tetramer of two alpha and two beta subunits. Requires Mg(2+) as cofactor.

It localises to the cytoplasm. The catalysed reaction is tRNA(Phe) + L-phenylalanine + ATP = L-phenylalanyl-tRNA(Phe) + AMP + diphosphate + H(+). The chain is Phenylalanine--tRNA ligase alpha subunit from Leifsonia xyli subsp. xyli (strain CTCB07).